The primary structure comprises 476 residues: Bifunctional protein HldE (476 aa).

Residues 1 to 319 (MKITLPEYDK…ANAVYSQQEI (319 aa)) form a ribokinase region. An ATP-binding site is contributed by 196 to 199 (NLAE). Residue Asp265 is part of the active site. A cytidylyltransferase region spans residues 345–476 (MTNGCFDILH…EIIKTIRNNS (132 aa)).

It in the N-terminal section; belongs to the carbohydrate kinase PfkB family. The protein in the C-terminal section; belongs to the cytidylyltransferase family. As to quaternary structure, homodimer.

It carries out the reaction D-glycero-beta-D-manno-heptose 7-phosphate + ATP = D-glycero-beta-D-manno-heptose 1,7-bisphosphate + ADP + H(+). It catalyses the reaction D-glycero-beta-D-manno-heptose 1-phosphate + ATP + H(+) = ADP-D-glycero-beta-D-manno-heptose + diphosphate. The protein operates within nucleotide-sugar biosynthesis; ADP-L-glycero-beta-D-manno-heptose biosynthesis; ADP-L-glycero-beta-D-manno-heptose from D-glycero-beta-D-manno-heptose 7-phosphate: step 1/4. It participates in nucleotide-sugar biosynthesis; ADP-L-glycero-beta-D-manno-heptose biosynthesis; ADP-L-glycero-beta-D-manno-heptose from D-glycero-beta-D-manno-heptose 7-phosphate: step 3/4. Functionally, catalyzes the phosphorylation of D-glycero-D-manno-heptose 7-phosphate at the C-1 position to selectively form D-glycero-beta-D-manno-heptose-1,7-bisphosphate. Catalyzes the ADP transfer from ATP to D-glycero-beta-D-manno-heptose 1-phosphate, yielding ADP-D-glycero-beta-D-manno-heptose. The sequence is that of Bifunctional protein HldE from Psychromonas ingrahamii (strain DSM 17664 / CCUG 51855 / 37).